Consider the following 874-residue polypeptide: MEERSKLRYLSMLEVERDTISDVSEKRKFFVTFTYPYMNGRLHLGHLFSISKADFFSYYKELQGYNVLFPFSFHCTGMPISASAKKLAEELSGEKVDLSVKKIIEDLGFDDVKPFTDPVHWVRTFPGLCERSLKRFHGNIDWRRSFITTDINKYYDSFIKWQFNRLNELGHLSFGKRHSIFCPVDKQPCLDHDRRKGENVKPVGVVLCKLRFSEGILLARIKQGCVPSKAVVGSRCDFIGFEYCNEKYFAEKDVFENVDAQASGICVRESVKGDFFGGRRFSGFGKEVVCDAIEKDVPCVVKGTQDKKDPSLAEYIKNEIELISKVESTETQLAETKDLLKFYEPEEEVISRSGGKCIVALTDQWYINYCDPEWKKKVKRCIENLVCTDDTRAILEDGLEWIGKWGFSRSFGLGTRIPWDSEYLIDSLSDSTIYMAMYTFKHFLYRDLEGKDELFPSNRLSDDVWNYIFLNRSITEDLAPYEEILSNCRESFNYFYPIDLRVGGKDLLKNHLIFFLFNHVALFEEKHWPKRMFTNGHLMLNSEKMSKSSGNYMTVDESLDKFGVSSTRMCLAVCGDGNEDANFVESNANAFVLKLYSYVKMIEELCTGRSLNPCILDLMKGYGEMGFADRFLMQTISMNVAHATRAHEDMTYRDVVKYGFYEMVHAKEMYHILGGTNNEILFLLCKAMTQLLYPIIPSLARYLIETYFYSNFSLPVPFLSDTAEIDGVSYLKNTLKRLVAQKRRKKRCEVVEILVGVEYSEWKRKCMSIIDQIACECKVLNINVSEEMKTGESQFVPKIIDAVREVLKEFGIPEKKGILFSMDYLNHPENYSVKFNEYEVLKAHKYYIENNTGLEVIVCVSPRADPGTPLFEFK.

The 'HIGH' region signature appears at 36-46 (PYMNGRLHLGH). A 'KMSKS' region motif is present at residues 544-548 (KMSKS). Lys547 serves as a coordination point for ATP.

This sequence belongs to the class-I aminoacyl-tRNA synthetase family.

The protein localises to the cytoplasm. The catalysed reaction is tRNA(Leu) + L-leucine + ATP = L-leucyl-tRNA(Leu) + AMP + diphosphate. This is Probable leucine--tRNA ligase, cytoplasmic from Encephalitozoon cuniculi (strain GB-M1) (Microsporidian parasite).